The sequence spans 29 residues: Thrombin-like enzyme collinein-2 (29 aa).

Monomer. In terms of tissue distribution, expressed by the venom gland.

The protein localises to the secreted. Its function is as follows. Thrombin-like snake venom serine protease. The chain is Thrombin-like enzyme collinein-2 from Crotalus durissus collilineatus (Brazilian rattlesnake).